The sequence spans 490 residues: GTPase Der (490 aa).

EngA-type G domains are found at residues 3 to 166 and 203 to 376; these read PVVA…MEDL and IKLA…DSST. GTP contacts are provided by residues 9 to 16, 56 to 60, 118 to 121, 209 to 216, 256 to 260, and 321 to 324; these read GRPNVGKS, DTGGI, NKTD, DTAGV, and NKWD. The region spanning 377-461 is the KH-like domain; that stretch reads RRVGTSMLTR…PIRIQFKEGE (85 aa).

The protein belongs to the TRAFAC class TrmE-Era-EngA-EngB-Septin-like GTPase superfamily. EngA (Der) GTPase family. Associates with the 50S ribosomal subunit.

In terms of biological role, GTPase that plays an essential role in the late steps of ribosome biogenesis. This is GTPase Der from Escherichia coli O81 (strain ED1a).